A 340-amino-acid polypeptide reads, in one-letter code: Annexin A2-A (340 aa).

A P10 binding site region spans residues 2-25 (ALIHEILGKLSLEGNQSCARQSAL). Annexin repeat units follow at residues 34–105 (FDAE…GLIK), 106–177 (TRPQ…ALAK), 190–262 (EKID…NLVQ), and 266–337 (NKPL…NLCG).

The protein belongs to the annexin family. As to quaternary structure, tetramer of 2 light chains (p10 proteins) and 2 heavy chains (p36 proteins).

It localises to the secreted. The protein localises to the extracellular space. Its subcellular location is the extracellular matrix. The protein resides in the basement membrane. Functionally, calcium-regulated membrane-binding protein whose affinity for calcium is greatly enhanced by anionic phospholipids. It binds two calcium ions with high affinity. The protein is Annexin A2-A (anxa2-a) of Xenopus laevis (African clawed frog).